The following is a 412-amino-acid chain: Major facilitator superfamily domain-containing protein 3 (412 aa).

A run of 12 helical transmembrane segments spans residues 10-30 (GLYL…PVLL), 40-60 (VGLA…APLV), 73-93 (STAG…PGAG), 94-114 (QAGL…GAAM), 138-158 (VQVV…LALL), 166-186 (LFLL…AAPA), 209-229 (VLAV…KLGE), 250-270 (LGLW…SLGG), 291-311 (LGGL…GASM), 321-341 (ALLS…VTFT), 361-381 (LLAT…GGLA), and 384-404 (LGPH…VLYL).

It belongs to the major facilitator superfamily.

The protein resides in the membrane. This chain is Major facilitator superfamily domain-containing protein 3 (MFSD3), found in Homo sapiens (Human).